Here is a 113-residue protein sequence, read N- to C-terminus: 4-cresol dehydrogenase [hydroxylating] cytochrome c subunit (113 aa).

A signal peptide spans 1–33 (MTFPFSGAAVKRMLVTGVVLPFGLLVAAGQAQA). Heme c is bound by residues C48, C51, H52, and M83.

Tetramer of two cytochrome subunits and two flavoprotein subunits. In terms of processing, binds 1 heme c group covalently per subunit.

It participates in aromatic compound metabolism; p-cresol degradation. Its function is as follows. This is the heme-containing component of the p-cresol methylhydroxylase. It accepts electrons from the flavoprotein subunit. The chain is 4-cresol dehydrogenase [hydroxylating] cytochrome c subunit (pchC) from Pseudomonas putida (Arthrobacter siderocapsulatus).